Here is a 601-residue protein sequence, read N- to C-terminus: Glutamine--fructose-6-phosphate aminotransferase [isomerizing] (601 aa).

Cys2 functions as the Nucleophile; for GATase activity in the catalytic mechanism. The region spanning 2–214 is the Glutamine amidotransferase type-2 domain; the sequence is CGITGYIGTD…NGDIAHLTET (213 aa). SIS domains follow at residues 281 to 420 and 453 to 591; these read STET…ARNA and IGRE…IDKP. The active-site For Fru-6P isomerization activity is the Lys596.

Homodimer.

The protein resides in the cytoplasm. It carries out the reaction D-fructose 6-phosphate + L-glutamine = D-glucosamine 6-phosphate + L-glutamate. Functionally, catalyzes the first step in hexosamine metabolism, converting fructose-6P into glucosamine-6P using glutamine as a nitrogen source. In Halobacterium salinarum (strain ATCC 700922 / JCM 11081 / NRC-1) (Halobacterium halobium), this protein is Glutamine--fructose-6-phosphate aminotransferase [isomerizing].